A 278-amino-acid polypeptide reads, in one-letter code: 4-deoxy-L-threo-5-hexosulose-uronate ketol-isomerase (278 aa).

The Zn(2+) site is built by histidine 196, histidine 198, glutamate 203, and histidine 245.

The protein belongs to the KduI family. It depends on Zn(2+) as a cofactor.

The catalysed reaction is 5-dehydro-4-deoxy-D-glucuronate = 3-deoxy-D-glycero-2,5-hexodiulosonate. It functions in the pathway glycan metabolism; pectin degradation; 2-dehydro-3-deoxy-D-gluconate from pectin: step 4/5. Functionally, catalyzes the isomerization of 5-dehydro-4-deoxy-D-glucuronate to 3-deoxy-D-glycero-2,5-hexodiulosonate. The protein is 4-deoxy-L-threo-5-hexosulose-uronate ketol-isomerase of Yersinia pestis bv. Antiqua (strain Antiqua).